The primary structure comprises 248 residues: Granzyme E (248 aa).

An N-terminal signal peptide occupies residues 1–18 (MPPVLILLTLLLPLGAGA). The propeptide occupies 19–20 (EE). A Peptidase S1 domain is found at 21–246 (IIGGHVVKPH…FLPWISRNMK (226 aa)). C50 and C66 are disulfide-bonded. The active-site Charge relay system is the H65. N-linked (GlcNAc...) asparagine glycans are attached at residues N68 and N102. The Charge relay system role is filled by D109. 2 disulfide bridges follow: C143/C210 and C175/C189. A glycan (N-linked (GlcNAc...) asparagine) is linked at N154. S204 functions as the Charge relay system in the catalytic mechanism. N-linked (GlcNAc...) asparagine glycosylation is present at N223.

Belongs to the peptidase S1 family. Granzyme subfamily.

It localises to the cytolytic granule. Its function is as follows. This enzyme is probably necessary for target cell lysis in cell-mediated immune responses. This Mus musculus (Mouse) protein is Granzyme E (Gzme).